The chain runs to 1703 residues: Arf-GAP with Rho-GAP domain, ANK repeat and PH domain-containing protein 2 (1703 aa).

In terms of domain architecture, SAM spans 6-70 (EVNADIRDFL…LKQLQMIFSK (65 aa)). Tyrosine 77 is subject to Phosphotyrosine. Disordered stretches follow at residues 84–132 (KNGS…LSEG), 191–232 (EEHT…NGTN), and 286–319 (PVPEIPGSTKSIPGSYFRDRRSNTTSAGKSLTLK). 3 stretches are compositionally biased toward polar residues: residues 85 to 103 (NGSTTKEQQHSDPSSSTHT), 123 to 132 (MVTTSTLSEG), and 197 to 214 (GNLTSEDSSKALSTNTEC). Over residues 222–232 (TSGTHSGNGTN) the composition is skewed to low complexity. Residues 308–319 (NTTSAGKSLTLK) are compositionally biased toward polar residues. PH domains follow at residues 480 to 572 (AKEK…SALK) and 585 to 677 (APEK…QSIA). The region spanning 674 to 809 (QSIAETLSDY…TLLASLTKEE (136 aa)) is the Arf-GAP domain. Residues 698–721 (CADCKAPDPDWASINLCVVICKKC) form a C4-type zinc finger. 2 PH domains span residues 899–1001 (QTAA…KRFV) and 1012–1110 (DYDL…KAAG). One can recognise a Rho-GAP domain in the interval 1114 to 1295 (NALQDQQLCK…DLINNYVEIF (182 aa)). One can recognise a Ras-associating domain in the interval 1324–1418 (GDLLIEVFVE…AYLVVKRFLT (95 aa)). Residues 1428 to 1531 (KSIKEGILKL…WMASIFIAQH (104 aa)) form the PH 5 domain. The residue at position 1627 (serine 1627) is a Phosphoserine. 2 disordered regions span residues 1633-1670 (DTEAEGPHGLPKAYKGPKTLKKTEERNSKATLDADPKL) and 1684-1703 (RSRPLHKELPDEQTLQKEVK). Basic and acidic residues-rich tracts occupy residues 1653–1670 (KKTEERNSKATLDADPKL) and 1688–1703 (LHKELPDEQTLQKEVK).

The protein resides in the cytoplasm. In terms of biological role, phosphatidylinositol 3,4,5-trisphosphate-dependent GTPase-activating protein that modulates actin cytoskeleton remodeling by regulating ARF and RHO family members. Is activated by phosphatidylinositol 3,4,5-trisphosphate (PtdIns(3,4,5)P3) binding. Can be activated by phosphatidylinositol 3,4-bisphosphate (PtdIns(3,4,5)P2) binding, albeit with lower efficiency. This Mus musculus (Mouse) protein is Arf-GAP with Rho-GAP domain, ANK repeat and PH domain-containing protein 2 (Arap2).